The sequence spans 364 residues: Peptidoglycan transport system permease protein YejB (364 aa).

A run of 6 helical transmembrane segments spans residues 9 to 29 (LALM…VIQF), 134 to 154 (SASL…PLGI), 171 to 191 (IIII…IVLF), 219 to 239 (IIDY…SAFA), 283 to 303 (IVIA…SLLI), and 325 to 345 (YPIV…VGLL). Positions 131–350 (LPVSASLGFW…VVGLLSDLIY (220 aa)) constitute an ABC transmembrane type-1 domain.

Belongs to the binding-protein-dependent transport system permease family. The complex is composed of one ATP-binding protein (YejF), two transmembrane proteins (YejB and YejE) and a solute-binding protein (YepA or YejA).

It localises to the cell inner membrane. Functionally, part of the ABC transporter complex YejBEF-YepA involved in the uptake of muropeptides, the breakdown products of cell wall peptidoglycan. The import of muropeptides into the cell enables peptidoglycan recycling, which is vital for cell wall integrity in this bacterium. Is also probably part of the ABC transporter complex YejABEF, which is likely involved in broad-spectrum peptide import. Responsible for the translocation of the substrate across the membrane. The polypeptide is Peptidoglycan transport system permease protein YejB (Agrobacterium fabrum (strain C58 / ATCC 33970) (Agrobacterium tumefaciens (strain C58))).